Here is a 610-residue protein sequence, read N- to C-terminus: Membrane protein insertase YidC (610 aa).

A helical membrane pass occupies residues 7–27; the sequence is FFITIALSILILALWQVFYLG. Residues 36–82 form a disordered region; sequence QARIEEQQRQAQQAAQNRQASSSTGDTPQMPANPDSIPGQGDTKAAG. Positions 44-55 are enriched in low complexity; that stretch reads RQAQQAAQNRQA. 5 consecutive transmembrane segments (helical) span residues 358 to 378, 387 to 407, 458 to 478, 510 to 530, and 546 to 566; these read FDLL…FYLI, NFGV…FPLA, WPVL…YVTI, TVPH…TMFL, and IFTW…AGLV.

It belongs to the OXA1/ALB3/YidC family. Type 1 subfamily. Interacts with the Sec translocase complex via SecD. Specifically interacts with transmembrane segments of nascent integral membrane proteins during membrane integration.

The protein localises to the cell inner membrane. Functionally, required for the insertion and/or proper folding and/or complex formation of integral membrane proteins into the membrane. Involved in integration of membrane proteins that insert both dependently and independently of the Sec translocase complex, as well as at least some lipoproteins. Aids folding of multispanning membrane proteins. The protein is Membrane protein insertase YidC of Brucella suis biovar 1 (strain 1330).